A 296-amino-acid polypeptide reads, in one-letter code: Glycine--tRNA ligase alpha subunit (296 aa).

This sequence belongs to the class-II aminoacyl-tRNA synthetase family. In terms of assembly, tetramer of two alpha and two beta subunits.

It is found in the cytoplasm. The catalysed reaction is tRNA(Gly) + glycine + ATP = glycyl-tRNA(Gly) + AMP + diphosphate. This Listeria monocytogenes serotype 4a (strain HCC23) protein is Glycine--tRNA ligase alpha subunit.